Reading from the N-terminus, the 556-residue chain is Thermosome subunit beta (556 aa).

The segment at 530–556 is disordered; that stretch reads LSTDKGDDDGGAGGMGGGMGGGMGGMM. Gly residues predominate over residues 540-556; the sequence is GAGGMGGGMGGGMGGMM.

It belongs to the TCP-1 chaperonin family. As to quaternary structure, forms an oligomeric complex of eight-membered rings.

Its function is as follows. Molecular chaperone; binds unfolded polypeptides in vitro, and has a weak ATPase activity. The sequence is that of Thermosome subunit beta (thsB) from Halobacterium salinarum (strain ATCC 700922 / JCM 11081 / NRC-1) (Halobacterium halobium).